Consider the following 266-residue polypeptide: HLA class II histocompatibility antigen, DR beta 5 chain (266 aa).

The signal sequence occupies residues 1–29 (MVCLKLPGGSYMAKLTVTLMVLSSPLALA). The interval 30–124 (GDTRPRFLQQ…GESFTVQRRV (95 aa)) is beta-1. The Extracellular portion of the chain corresponds to 30-227 (GDTRPRFLQQ…RAQSESAQSK (198 aa)). Disulfide bonds link cysteine 44–cysteine 108 and cysteine 146–cysteine 202. N-linked (GlcNAc...) asparagine glycosylation occurs at asparagine 48. Residues 125–227 (EPKVTVYPAR…RAQSESAQSK (103 aa)) are beta-2. The Ig-like C1-type domain maps to 126–214 (PKVTVYPART…EHPSVTSPLT (89 aa)). The chain crosses the membrane as a helical span at residues 228-248 (MLSGVGGFVLGLLFLGAGLFI). Residues 249-266 (YFKNQKGHSGLHPTGLVS) are Cytoplasmic-facing.

This sequence belongs to the MHC class II family. Heterodimer of an alpha and a beta subunit; also referred as MHC class II molecule. In the endoplasmic reticulum (ER) it forms a heterononamer; 3 MHC class II molecules bind to a CD74 homotrimer (also known as invariant chain or HLA class II histocompatibility antigen gamma chain). In the endosomal/lysosomal system; CD74 undergoes sequential degradation by various proteases; leaving a small fragment termed CLIP on each MHC class II molecule. MHC class II molecule interacts with HLA_DM, and HLA_DO in B-cells, in order to release CLIP and facilitate the binding of antigenic peptides. In terms of processing, ubiquitinated by MARCH1 and MARCH8 at Lys-254 leading to down-regulation of MHC class II.

It localises to the cell membrane. The protein localises to the endoplasmic reticulum membrane. It is found in the golgi apparatus. Its subcellular location is the trans-Golgi network membrane. The protein resides in the endosome membrane. It localises to the lysosome membrane. The protein localises to the late endosome membrane. Functionally, binds peptides derived from antigens that access the endocytic route of antigen presenting cells (APC) and presents them on the cell surface for recognition by the CD4 T-cells. The peptide binding cleft accommodates peptides of 10-30 residues. The peptides presented by MHC class II molecules are generated mostly by degradation of proteins that access the endocytic route, where they are processed by lysosomal proteases and other hydrolases. Exogenous antigens that have been endocytosed by the APC are thus readily available for presentation via MHC II molecules, and for this reason this antigen presentation pathway is usually referred to as exogenous. As membrane proteins on their way to degradation in lysosomes as part of their normal turn-over are also contained in the endosomal/lysosomal compartments, exogenous antigens must compete with those derived from endogenous components. Autophagy is also a source of endogenous peptides, autophagosomes constitutively fuse with MHC class II loading compartments. In addition to APCs, other cells of the gastrointestinal tract, such as epithelial cells, express MHC class II molecules and CD74 and act as APCs, which is an unusual trait of the GI tract. To produce a MHC class II molecule that presents an antigen, three MHC class II molecules (heterodimers of an alpha and a beta chain) associate with a CD74 trimer in the ER to form a heterononamer. Soon after the entry of this complex into the endosomal/lysosomal system where antigen processing occurs, CD74 undergoes a sequential degradation by various proteases, including CTSS and CTSL, leaving a small fragment termed CLIP (class-II-associated invariant chain peptide). The removal of CLIP is facilitated by HLA-DM via direct binding to the alpha-beta-CLIP complex so that CLIP is released. HLA-DM stabilizes MHC class II molecules until primary high affinity antigenic peptides are bound. The MHC II molecule bound to a peptide is then transported to the cell membrane surface. In B-cells, the interaction between HLA-DM and MHC class II molecules is regulated by HLA-DO. Primary dendritic cells (DCs) also to express HLA-DO. Lysosomal microenvironment has been implicated in the regulation of antigen loading into MHC II molecules, increased acidification produces increased proteolysis and efficient peptide loading. The protein is HLA class II histocompatibility antigen, DR beta 5 chain of Homo sapiens (Human).